The primary structure comprises 536 residues: Pre-mRNA-splicing factor SLU7-B (536 aa).

The disordered stretch occupies residues 1-42 (MATASVAFKSREDHRKKLELEEARKAGLAPAEVDEDGKEINP). Basic and acidic residues predominate over residues 9–25 (KSREDHRKKLELEEARK). The CCHC-type zinc finger occupies 96-109 (CINCGAMTHSSKAC). 2 disordered regions span residues 176 to 201 (LKKL…DLDD) and 488 to 507 (KEDL…YNVN). Over residues 187–200 (NGDDATSDGEEDLD) the composition is skewed to acidic residues. Phosphoserine is present on Ser193. The short motif at 486–493 (LKKEDLSR) is the Nuclear localization signal element. The segment covering 488 to 501 (KEDLSRREEKDERK) has biased composition (basic and acidic residues).

The protein belongs to the SLU7 family. As to quaternary structure, interacts with PHYB in photobodies under red light.

The protein localises to the nucleus. Its function is as follows. Participates in the second catalytic step of pre-mRNA splicing, when the free hydroxyl group of exon I attacks the 3'-splice site to generate spliced mRNA and the excised lariat intron. Splicing factor acting as a negative regulator of seedling photomorphogenesis by antagonizing PHYB signaling to promote light-induced hypocotyl elongation. Prevents the accumulation of functionally spliced RVE8a form, a circadian clock regulator mediating the transcriptional activation of clock genes containing evening elements (EE), but promotes PIF4 expression to fine-tune hypocotyl elongation in the light. Together with SMP1, involved in the timing of cell cycle arrest during leaf development, in a STRUWWELPETER (SWP) dependent manner; promotes cell proliferation in developing organs. This is Pre-mRNA-splicing factor SLU7-B from Arabidopsis thaliana (Mouse-ear cress).